Here is a 323-residue protein sequence, read N- to C-terminus: Methionyl-tRNA formyltransferase (323 aa).

113–116 contacts (6S)-5,6,7,8-tetrahydrofolate; the sequence is SLLP.

It belongs to the Fmt family.

It catalyses the reaction L-methionyl-tRNA(fMet) + (6R)-10-formyltetrahydrofolate = N-formyl-L-methionyl-tRNA(fMet) + (6S)-5,6,7,8-tetrahydrofolate + H(+). Functionally, attaches a formyl group to the free amino group of methionyl-tRNA(fMet). The formyl group appears to play a dual role in the initiator identity of N-formylmethionyl-tRNA by promoting its recognition by IF2 and preventing the misappropriation of this tRNA by the elongation apparatus. The chain is Methionyl-tRNA formyltransferase from Nitrosococcus oceani (strain ATCC 19707 / BCRC 17464 / JCM 30415 / NCIMB 11848 / C-107).